The primary structure comprises 892 residues: Alanine--tRNA ligase (892 aa).

Residues histidine 574, histidine 578, cysteine 676, and histidine 680 each coordinate Zn(2+).

The protein belongs to the class-II aminoacyl-tRNA synthetase family. It depends on Zn(2+) as a cofactor.

It is found in the cytoplasm. It catalyses the reaction tRNA(Ala) + L-alanine + ATP = L-alanyl-tRNA(Ala) + AMP + diphosphate. Catalyzes the attachment of alanine to tRNA(Ala) in a two-step reaction: alanine is first activated by ATP to form Ala-AMP and then transferred to the acceptor end of tRNA(Ala). Also edits incorrectly charged Ser-tRNA(Ala) and Gly-tRNA(Ala) via its editing domain. The protein is Alanine--tRNA ligase of Prochlorococcus marinus (strain MIT 9303).